The sequence spans 247 residues: uncharacterized protein (247 aa).

Its subcellular location is the mitochondrion. This is an uncharacterized protein from Schizosaccharomyces pombe (strain 972 / ATCC 24843) (Fission yeast).